Reading from the N-terminus, the 80-residue chain is Putative membrane protein insertion efficiency factor (80 aa).

It belongs to the UPF0161 family.

The protein localises to the cell membrane. Its function is as follows. Could be involved in insertion of integral membrane proteins into the membrane. This is Putative membrane protein insertion efficiency factor from Limosilactobacillus fermentum (strain NBRC 3956 / LMG 18251) (Lactobacillus fermentum).